We begin with the raw amino-acid sequence, 147 residues long: uncharacterized protein (147 aa).

Helical transmembrane passes span 21–41 and 67–87; these read LMLWIAILIFVIAFAMIIVFV and ALFGLVFSVLGYLITALSIPL.

It is found in the cell membrane. This is an uncharacterized protein from Ureaplasma parvum serovar 3 (strain ATCC 700970).